The chain runs to 194 residues: Ion-translocating oxidoreductase complex subunit A (194 aa).

Helical transmembrane passes span 4–24 (LVLILVGAILVNNFVLVQFLG), 39–59 (IGLALATTFVLTLAAMCSYLL), 72–92 (LRTIGFILVIAVVVQFTEMLV), 102–122 (VLGIFLPLITTNCIVLGVALL), 135–155 (GINGFGAGLGFSLVLVLFAAM), and 172–192 (AIGLITAGLMSLAFMGFSGLI).

It belongs to the NqrDE/RnfAE family. The complex is composed of six subunits: RnfA, RnfB, RnfC, RnfD, RnfE and RnfG.

The protein localises to the cell inner membrane. Part of a membrane-bound complex that couples electron transfer with translocation of ions across the membrane. The polypeptide is Ion-translocating oxidoreductase complex subunit A (Azotobacter vinelandii (strain DJ / ATCC BAA-1303)).